Here is a 268-residue protein sequence, read N- to C-terminus: Glucosamine-6-phosphate deaminase (268 aa).

Catalysis depends on aspartate 72, which acts as the Proton acceptor; for enolization step. Catalysis depends on aspartate 141, which acts as the For ring-opening step. The active-site Proton acceptor; for ring-opening step is histidine 143. The active-site For ring-opening step is glutamate 148.

This sequence belongs to the glucosamine/galactosamine-6-phosphate isomerase family. NagB subfamily. Homohexamer.

The enzyme catalyses alpha-D-glucosamine 6-phosphate + H2O = beta-D-fructose 6-phosphate + NH4(+). It participates in amino-sugar metabolism; N-acetylneuraminate degradation; D-fructose 6-phosphate from N-acetylneuraminate: step 5/5. With respect to regulation, allosterically activated by N-acetylglucosamine 6-phosphate (GlcNAc6P). Its function is as follows. Catalyzes the reversible isomerization-deamination of glucosamine 6-phosphate (GlcN6P) to form fructose 6-phosphate (Fru6P) and ammonium ion. This Histophilus somni (strain 129Pt) (Haemophilus somnus) protein is Glucosamine-6-phosphate deaminase.